A 130-amino-acid polypeptide reads, in one-letter code: Small ribosomal subunit protein uS11 (130 aa).

This sequence belongs to the universal ribosomal protein uS11 family. In terms of assembly, part of the 30S ribosomal subunit. Interacts with proteins S7 and S18. Binds to IF-3.

Located on the platform of the 30S subunit, it bridges several disparate RNA helices of the 16S rRNA. Forms part of the Shine-Dalgarno cleft in the 70S ribosome. In Lactobacillus helveticus (strain DPC 4571), this protein is Small ribosomal subunit protein uS11.